The sequence spans 122 residues: Large ribosomal subunit protein uL14c (122 aa).

It belongs to the universal ribosomal protein uL14 family. As to quaternary structure, part of the 50S ribosomal subunit.

The protein resides in the plastid. Its subcellular location is the chloroplast. Binds to 23S rRNA. This is Large ribosomal subunit protein uL14c from Coffea arabica (Arabian coffee).